Consider the following 905-residue polypeptide: DNA gyrase subunit A (905 aa).

In terms of domain architecture, Topo IIA-type catalytic spans 35-524; it reads IPDVRDGLKP…GEFDQDIEDL (490 aa). Tyr-123 serves as the catalytic O-(5'-phospho-DNA)-tyrosine intermediate. Residues 551 to 557 carry the GyrA-box motif; sequence QKRGGKG. Residues 885–905 are disordered; sequence TAESEEDSELEEEGLEQSEEV. The span at 886-905 shows a compositional bias: acidic residues; it reads AESEEDSELEEEGLEQSEEV.

This sequence belongs to the type II topoisomerase GyrA/ParC subunit family. In terms of assembly, heterotetramer, composed of two GyrA and two GyrB chains. In the heterotetramer, GyrA contains the active site tyrosine that forms a transient covalent intermediate with DNA, while GyrB binds cofactors and catalyzes ATP hydrolysis.

Its subcellular location is the cytoplasm. It catalyses the reaction ATP-dependent breakage, passage and rejoining of double-stranded DNA.. Its function is as follows. A type II topoisomerase that negatively supercoils closed circular double-stranded (ds) DNA in an ATP-dependent manner to modulate DNA topology and maintain chromosomes in an underwound state. Negative supercoiling favors strand separation, and DNA replication, transcription, recombination and repair, all of which involve strand separation. Also able to catalyze the interconversion of other topological isomers of dsDNA rings, including catenanes and knotted rings. Type II topoisomerases break and join 2 DNA strands simultaneously in an ATP-dependent manner. The chain is DNA gyrase subunit A from Rickettsia conorii (strain ATCC VR-613 / Malish 7).